We begin with the raw amino-acid sequence, 223 residues long: Small ribosomal subunit protein uS3 (223 aa).

Residues 39–108 enclose the KH type-2 domain; that stretch reads IRNFVKKNSY…NILINIVEVK (70 aa).

This sequence belongs to the universal ribosomal protein uS3 family. As to quaternary structure, part of the 30S ribosomal subunit. Forms a tight complex with proteins S10 and S14.

In terms of biological role, binds the lower part of the 30S subunit head. Binds mRNA in the 70S ribosome, positioning it for translation. The chain is Small ribosomal subunit protein uS3 from Clostridium botulinum (strain Kyoto / Type A2).